The chain runs to 518 residues: 2-isopropylmalate synthase (518 aa).

One can recognise a Pyruvate carboxyltransferase domain in the interval Ile-5–His-268. Mn(2+) is bound by residues Asp-14, His-202, His-204, and Asn-238. The interval Thr-393–Val-518 is regulatory domain.

It belongs to the alpha-IPM synthase/homocitrate synthase family. LeuA type 1 subfamily. Homodimer. Requires Mn(2+) as cofactor.

The protein localises to the cytoplasm. It carries out the reaction 3-methyl-2-oxobutanoate + acetyl-CoA + H2O = (2S)-2-isopropylmalate + CoA + H(+). It functions in the pathway amino-acid biosynthesis; L-leucine biosynthesis; L-leucine from 3-methyl-2-oxobutanoate: step 1/4. In terms of biological role, catalyzes the condensation of the acetyl group of acetyl-CoA with 3-methyl-2-oxobutanoate (2-ketoisovalerate) to form 3-carboxy-3-hydroxy-4-methylpentanoate (2-isopropylmalate). The protein is 2-isopropylmalate synthase of Pasteurella multocida (strain Pm70).